We begin with the raw amino-acid sequence, 432 residues long: UDP-N-acetylglucosamine 1-carboxyvinyltransferase (432 aa).

Position 22 to 23 (22 to 23) interacts with phosphoenolpyruvate; sequence KN. R96 lines the UDP-N-acetyl-alpha-D-glucosamine pocket. The Proton donor role is filled by C120. The residue at position 120 (C120) is a 2-(S-cysteinyl)pyruvic acid O-phosphothioketal. Residues 125 to 129, D310, and I332 contribute to the UDP-N-acetyl-alpha-D-glucosamine site; that span reads RPVDL.

This sequence belongs to the EPSP synthase family. MurA subfamily.

It localises to the cytoplasm. It catalyses the reaction phosphoenolpyruvate + UDP-N-acetyl-alpha-D-glucosamine = UDP-N-acetyl-3-O-(1-carboxyvinyl)-alpha-D-glucosamine + phosphate. The protein operates within cell wall biogenesis; peptidoglycan biosynthesis. Cell wall formation. Adds enolpyruvyl to UDP-N-acetylglucosamine. In Caulobacter sp. (strain K31), this protein is UDP-N-acetylglucosamine 1-carboxyvinyltransferase.